Here is a 361-residue protein sequence, read N- to C-terminus: sn-glycerol-3-phosphate import ATP-binding protein UgpC (361 aa).

Positions 4 to 235 (VTLRNVRKTY…PATTFVASFI (232 aa)) constitute an ABC transporter domain. 37–44 (GPSGCGKS) contacts ATP.

The protein belongs to the ABC transporter superfamily. sn-glycerol-3-phosphate importer (TC 3.A.1.1.3) family. As to quaternary structure, the complex is composed of two ATP-binding proteins (UgpC), two transmembrane proteins (UgpA and UgpE) and a solute-binding protein (UgpB).

Its subcellular location is the cell inner membrane. It carries out the reaction sn-glycerol 3-phosphate(out) + ATP + H2O = sn-glycerol 3-phosphate(in) + ADP + phosphate + H(+). In terms of biological role, part of the ABC transporter complex UgpBAEC involved in sn-glycerol-3-phosphate (G3P) import. Responsible for energy coupling to the transport system. The polypeptide is sn-glycerol-3-phosphate import ATP-binding protein UgpC (Rhodopseudomonas palustris (strain BisA53)).